The sequence spans 199 residues: Photosystem I reaction center subunit XI (199 aa).

Transmembrane regions (helical) follow at residues 108 to 128 (LTAG…LFVL) and 165 to 185 (FWLG…TLHL).

The protein belongs to the PsaL family.

It localises to the cellular thylakoid membrane. In Prochlorococcus marinus (strain MIT 9301), this protein is Photosystem I reaction center subunit XI.